The primary structure comprises 292 residues: Phosphatidylglycerol--prolipoprotein diacylglyceryl transferase (292 aa).

The next 3 helical transmembrane spans lie at 18–38 (LFGVTFALRWYALAYIAGLLI), 67–87 (LLTWVILGVILGGRLGFVLFY), and 105–125 (GGMSFHGGFLGVMTALVAFCL). Position 150 (R150) interacts with a 1,2-diacyl-sn-glycero-3-phospho-(1'-sn-glycerol). The next 3 helical transmembrane spans lie at 193 to 213 (QIYEAGLEGILLFTVLSLLVW), 222 to 242 (GSVSGMFLAGYGATRFLVEFV), and 266 to 286 (GLTMGQILSLPMILLGLYLIL).

Belongs to the Lgt family.

The protein resides in the cell inner membrane. The enzyme catalyses L-cysteinyl-[prolipoprotein] + a 1,2-diacyl-sn-glycero-3-phospho-(1'-sn-glycerol) = an S-1,2-diacyl-sn-glyceryl-L-cysteinyl-[prolipoprotein] + sn-glycerol 1-phosphate + H(+). It participates in protein modification; lipoprotein biosynthesis (diacylglyceryl transfer). Catalyzes the transfer of the diacylglyceryl group from phosphatidylglycerol to the sulfhydryl group of the N-terminal cysteine of a prolipoprotein, the first step in the formation of mature lipoproteins. The sequence is that of Phosphatidylglycerol--prolipoprotein diacylglyceryl transferase from Cereibacter sphaeroides (strain ATCC 17023 / DSM 158 / JCM 6121 / CCUG 31486 / LMG 2827 / NBRC 12203 / NCIMB 8253 / ATH 2.4.1.) (Rhodobacter sphaeroides).